The following is a 341-amino-acid chain: Hyaluronidase A (341 aa).

3 N-linked (GlcNAc...) asparagine glycosylation sites follow: Asn-3, Asn-68, and Asn-83. 2 cysteine pairs are disulfide-bonded: Cys-23-Cys-311 and Cys-189-Cys-201.

It belongs to the glycosyl hydrolase 56 family. Expressed by the venom gland.

Its subcellular location is the secreted. It catalyses the reaction Random hydrolysis of (1-&gt;4)-linkages between N-acetyl-beta-D-glucosamine and D-glucuronate residues in hyaluronate.. Its function is as follows. May hydrolyze high molecular weight hyaluronic acid to produce small oligosaccharides. This Vespa velutina (Asian yellow-legged hornet) protein is Hyaluronidase A.